Consider the following 218-residue polypeptide: E3 ubiquitin-protein ligase MARCHF3 (218 aa).

An RING-CH-type zinc finger spans residues 63 to 123 (SPFNDRPMCR…ELCHFRFAVE (61 aa)). C71, C74, C87, C89, H97, C100, C113, and C116 together coordinate Zn(2+). Transmembrane regions (helical) follow at residues 145–165 (LFGDMVCFLFITPLATISGWL) and 180–200 (LEAVGLIALTVALFTIYLFWT).

As to quaternary structure, interacts with MARCHF2 and STX6.

The protein localises to the cytoplasmic vesicle membrane. The protein resides in the early endosome membrane. The catalysed reaction is S-ubiquitinyl-[E2 ubiquitin-conjugating enzyme]-L-cysteine + [acceptor protein]-L-lysine = [E2 ubiquitin-conjugating enzyme]-L-cysteine + N(6)-ubiquitinyl-[acceptor protein]-L-lysine.. The protein operates within protein modification; protein ubiquitination. Its function is as follows. E3 ubiquitin-protein ligase which may be involved in endosomal trafficking. E3 ubiquitin ligases accept ubiquitin from an E2 ubiquitin-conjugating enzyme in the form of a thioester and then directly transfer the ubiquitin to targeted substrates. In Mus musculus (Mouse), this protein is E3 ubiquitin-protein ligase MARCHF3 (Marchf3).